Reading from the N-terminus, the 188-residue chain is Large ribosomal subunit protein uL5 (188 aa).

The protein belongs to the universal ribosomal protein uL5 family. Part of the 50S ribosomal subunit; part of the 5S rRNA/L5/L18/L25 subcomplex. Contacts the 5S rRNA and the P site tRNA. Forms a bridge to the 30S subunit in the 70S ribosome.

Functionally, this is one of the proteins that bind and probably mediate the attachment of the 5S RNA into the large ribosomal subunit, where it forms part of the central protuberance. In the 70S ribosome it contacts protein S13 of the 30S subunit (bridge B1b), connecting the 2 subunits; this bridge is implicated in subunit movement. Contacts the P site tRNA; the 5S rRNA and some of its associated proteins might help stabilize positioning of ribosome-bound tRNAs. This chain is Large ribosomal subunit protein uL5, found in Aquifex aeolicus (strain VF5).